An 893-amino-acid polypeptide reads, in one-letter code: Sperm-associated antigen 1 (893 aa).

Residues 112-126 are compositionally biased toward basic and acidic residues; sequence ENTRHFHDPEKHPGV. The tract at residues 112–155 is disordered; the sequence is ENTRHFHDPEKHPGVEDPLPPVRGSNSCPRGGKETSSKSKTAKK. TPR repeat units lie at residues 213-246, 247-279, and 280-313; these read ANRE…LPTA, TAYN…EPGN, and IKAL…EPDN. Disordered stretches follow at residues 324-344, 349-368, and 373-437; these read EREL…KRMV, ENSG…DDGV, and MGNI…SRGN. Phosphoserine is present on S351. The segment covering 403 to 415 has biased composition (polar residues); it reads QEGQPETGTASTS. The span at 416 to 437 shows a compositional bias: basic and acidic residues; the sequence is DNHDLEERRAADSPGDLKSRGN. TPR repeat units follow at residues 429–463, 471–504, 506–538, 605–638, and 639–672; these read PGDL…EPTG, SILY…QPFA, KPLL…DCRI, FQAL…NSKA, and CAIY…DSKN. 630 to 637 contacts GTP; it reads ECLKINSK. At S703 the chain carries Phosphoserine. Residues 704-756 are disordered; sequence PDSSEAARHLDTKNDTAPPSRERERRRIEIQEVDDSSDEEPERPAEASAVEEG. Over residues 708 to 733 the composition is skewed to basic and acidic residues; that stretch reads EAARHLDTKNDTAPPSRERERRRIEI. Residues 734–744 are compositionally biased toward acidic residues; sequence QEVDDSSDEEP. A phosphoserine mark is found at S739, S740, and S758.

Testis and sperm.

It localises to the cytoplasm. The protein resides in the dynein axonemal particle. In terms of biological role, may play a role in the cytoplasmic assembly of the ciliary dynein arms. Binds GTP and has GTPase activity. Plays a role in fertilization. This is Sperm-associated antigen 1 (Spag1) from Rattus norvegicus (Rat).